The chain runs to 191 residues: Transcription factor FapR (191 aa).

This sequence belongs to the FapR family.

In terms of biological role, transcriptional factor involved in regulation of membrane lipid biosynthesis by repressing genes involved in fatty acid and phospholipid metabolism. The protein is Transcription factor FapR of Oceanobacillus iheyensis (strain DSM 14371 / CIP 107618 / JCM 11309 / KCTC 3954 / HTE831).